A 304-amino-acid chain; its full sequence is Small glutamine-rich tetratricopeptide repeat-containing protein beta (304 aa).

TPR repeat units lie at residues 15-49 (LREQSQMDAYTSDEQESLEVAIQCLETVFKISPED), 85-118 (ADQLKDEGNNHMKEENYAAAVDCYTQAIELDPNN), 120-152 (VYYCNRAAAQSKLSHYTDAIKDCEKAIAIDSKY), and 153-186 (SKAYGRMGLALTAMNKFEEAVTSYQKALDLDPEN). Lys131 carries the N6-acetyllysine modification. Ser293, Ser295, and Ser297 each carry phosphoserine.

This sequence belongs to the SGT family. As to quaternary structure, homooligomerize. In terms of tissue distribution, expressed specifically in brain.

In terms of biological role, co-chaperone that binds directly to HSC70 and HSP70 and regulates their ATPase activity. The polypeptide is Small glutamine-rich tetratricopeptide repeat-containing protein beta (Sgtb) (Rattus norvegicus (Rat)).